We begin with the raw amino-acid sequence, 270 residues long: Homeobox protein vent1B (270 aa).

2 stretches are compositionally biased toward basic and acidic residues: residues 17–26 (EEAADGKDSM) and 44–59 (YAKE…DVQE). Disordered regions lie at residues 17–66 (EEAA…SFQC) and 88–134 (TWGS…LRTA). Residues 89–99 (WGSSDEFSSAG) are compositionally biased toward polar residues. Basic and acidic residues predominate over residues 116 to 131 (QDTDHNGKSTKSDRRL). The homeobox DNA-binding region spans 128–187 (DRRLRTAFSPQQISKLEQAFNKQRYLGASERKKLATSLMLSEIQVKTWFQNRRMKLKRQI).

As to expression, expressed in the ventral marginal zone of gastrulae. At the end of gastrulation, predominantly localized to the ventral region of the closing slit blastopore. At early tail bud stage, expression is maintained only in the forming proctodeum.

It localises to the nucleus. In terms of biological role, probable transcription regulator. Acts in a ventral signaling pathway downstream of bmp4 and vent2B. This chain is Homeobox protein vent1B (vent1B), found in Xenopus laevis (African clawed frog).